A 159-amino-acid polypeptide reads, in one-letter code: Ribosomal RNA large subunit methyltransferase H (159 aa).

Residues leucine 76, glycine 108, and 127–132 (FGRLTL) each bind S-adenosyl-L-methionine.

This sequence belongs to the RNA methyltransferase RlmH family. In terms of assembly, homodimer.

It localises to the cytoplasm. It catalyses the reaction pseudouridine(1915) in 23S rRNA + S-adenosyl-L-methionine = N(3)-methylpseudouridine(1915) in 23S rRNA + S-adenosyl-L-homocysteine + H(+). In terms of biological role, specifically methylates the pseudouridine at position 1915 (m3Psi1915) in 23S rRNA. This Listeria monocytogenes serotype 4a (strain HCC23) protein is Ribosomal RNA large subunit methyltransferase H.